The sequence spans 274 residues: uncharacterized protein (274 aa).

An N-terminal signal peptide occupies residues 1–21 (MRKLTLLPLLLIITGLLTVQA). A helical transmembrane segment spans residues 249–266 (TSAFVILTASALIFIYLF).

It is found in the membrane. This is an uncharacterized protein from Archaeoglobus fulgidus (strain ATCC 49558 / DSM 4304 / JCM 9628 / NBRC 100126 / VC-16).